A 362-amino-acid polypeptide reads, in one-letter code: N-alpha-acetyltransferase 30 (362 aa).

The segment covering methionine 1–proline 20 has biased composition (pro residues). Disordered stretches follow at residues methionine 1–arginine 26, cysteine 38–isoleucine 88, and alanine 113–glutamate 182. Phosphoserine is present on residues serine 39 and serine 55. The span at serine 39–histidine 48 shows a compositional bias: acidic residues. Phosphothreonine is present on threonine 117. A compositionally biased stretch (low complexity) spans alanine 149 to alanine 165. Serine 152 carries the phosphoserine modification. Acidic residues predominate over residues threonine 173–glutamate 182. Residues serine 190, serine 196, and serine 199 each carry the phosphoserine modification. An N-acetyltransferase domain is found at arginine 214 to arginine 362. Residue lysine 233 is modified to N6-acetyllysine.

The protein belongs to the acetyltransferase family. MAK3 subfamily. As to quaternary structure, component of the N-terminal acetyltransferase C (NatC) complex, which is composed of NAA35, NAA38 and NAA30.

The protein localises to the cytoplasm. Its subcellular location is the nucleus. The catalysed reaction is N-terminal L-methionyl-L-leucyl-[protein] + acetyl-CoA = N-terminal N(alpha)-acetyl-L-methionyl-L-leucyl-[protein] + CoA + H(+). It carries out the reaction N-terminal L-methionyl-L-isoleucyl-[protein] + acetyl-CoA = N-terminal N(alpha)-acetyl-L-methionyl-L-isoleucyl-[protein] + CoA + H(+). The enzyme catalyses N-terminal L-methionyl-L-phenylalanyl-[protein] + acetyl-CoA = N-terminal N(alpha)-acetyl-L-methionyl-L-phenylalanyl-[protein] + CoA + H(+). It catalyses the reaction N-terminal L-methionyl-L-tryptophyl-[protein] + acetyl-CoA = N-terminal N(alpha)-acetyl-L-methionyl-L-tryptophyl-[protein] + CoA + H(+). The catalysed reaction is N-terminal L-methionyl-L-tyrosyl-[protein] + acetyl-CoA = N-terminal N(alpha)-acetyl-L-methionyl-L-tyrosyl-[protein] + CoA + H(+). Catalytic subunit of the N-terminal acetyltransferase C (NatC) complex. Catalyzes acetylation of the N-terminal methionine residues of peptides beginning with Met-Leu-Ala and Met-Leu-Gly. N-terminal acetylation protects proteins from ubiquitination and degradation by the N-end rule pathway. Necessary for the lysosomal localization and function of ARL8B sugeesting that ARL8B is a NatC substrate. The sequence is that of N-alpha-acetyltransferase 30 (NAA30) from Homo sapiens (Human).